The following is a 244-amino-acid chain: L-xylulose reductase (244 aa).

Met1 is modified (N-acetylmethionine). Residue Leu11–Arg39 participates in NADP(+) binding. Arg21 is modified (omega-N-methylarginine). Ser136 is a substrate binding site. Catalysis depends on Tyr149, which acts as the Proton acceptor. Lys153 is a catalytic residue.

This sequence belongs to the short-chain dehydrogenases/reductases (SDR) family. In terms of assembly, homotetramer. Highly expressed in kidney and liver. Expressed in epididymis. Expressed at intermediate level in lung. Weakly expressed in brain, heart, spleen and testis.

The protein localises to the membrane. It catalyses the reaction xylitol + NADP(+) = L-xylulose + NADPH + H(+). In terms of biological role, catalyzes the NADPH-dependent reduction of several pentoses, tetroses, trioses, alpha-dicarbonyl compounds and L-xylulose. Participates in the uronate cycle of glucose metabolism. May play a role in the water absorption and cellular osmoregulation in the proximal renal tubules by producing xylitol, an osmolyte, thereby preventing osmolytic stress from occurring in the renal tubules. This is L-xylulose reductase (DCXR) from Cavia porcellus (Guinea pig).